We begin with the raw amino-acid sequence, 574 residues long: Transmembrane glycoprotein NMB (574 aa).

An N-terminal signal peptide occupies residues 1–22 (MESLCGVLGFLLLAAGLPLQAA). The Extracellular segment spans residues 23-502 (KRFRDVLGHE…DPDSPLRAVN (480 aa)). Asparagine 93, asparagine 134, asparagine 200, asparagine 249, asparagine 275, asparagine 296, asparagine 300, asparagine 306, and asparagine 312 each carry an N-linked (GlcNAc...) asparagine glycan. The PKD domain maps to 250-338 (LSDEIFLRDL…STPPPPSTPP (89 aa)). A disordered region spans residues 320–353 (PGPCPPPSPSTPPPPSTPPSPPPSPLPTLSTPSP). Over residues 321–345 (GPCPPPSPSTPPPPSTPPSPPPSPL) the composition is skewed to pro residues. 2 N-linked (GlcNAc...) asparagine glycosylation sites follow: asparagine 463 and asparagine 471. Residues 503-523 (GVLISIGCLAVLVTMVTILLY) traverse the membrane as a helical segment. The Cytoplasmic segment spans residues 524-574 (KKHKAYKPIGNCPRNTVKGKGLSVLLSHAKAPFFRGDQEKDPLLQDKPRTL). The residue at position 546 (serine 546) is a Phosphoserine. Positions 558-560 (RGD) match the Cell attachment site motif.

The protein belongs to the PMEL/NMB family. May be up-regulated in bone metastatic breast cancer cells.

The protein localises to the cell membrane. It is found in the melanosome membrane. Its subcellular location is the early endosome membrane. Its function is as follows. Could be a melanogenic enzyme. The sequence is that of Transmembrane glycoprotein NMB (Gpnmb) from Mus musculus (Mouse).